The chain runs to 95 residues: Pancreatic polypeptide prohormone (95 aa).

An N-terminal signal peptide occupies residues 1–29; that stretch reads MAAARLCLSLLLLSTCVALLLQPLLGAQG. Tyrosine 65 carries the post-translational modification Tyrosine amide. A propeptide spanning residues 89 to 95 is cleaved from the precursor; the sequence is ELSPLDL.

The protein belongs to the NPY family.

Its subcellular location is the secreted. Hormone secreted by pancreatic cells that acts as a regulator of pancreatic and gastrointestinal functions probably by signaling through the G protein-coupled receptor NPY4R2. The polypeptide is Pancreatic polypeptide prohormone (Homo sapiens (Human)).